A 326-amino-acid polypeptide reads, in one-letter code: Protease inhibitor (326 aa).

Residues 1–24 form the signal peptide; that stretch reads MKTIRTGMMTLAALAVLGTNVVSA. 2 consecutive repeat copies span residues 177 to 208 and 272 to 304. The segment at 177–304 is 2 X 32 AA approximate repeats; it reads IILHVDKETK…DLKAEMKVFA (128 aa).

In terms of processing, proteolytically cleaved to yield at least three forms (BBRPI-A, -B, and -C).

The protein resides in the secreted. Its function is as follows. Shows inhibitory activity towards serine proteases, such as trypsin, chymotrypsin and subtilisin. May form a trypsin-inhibitor complex in a molar ratio of 1:1. The protein is Protease inhibitor of Brevibacillus choshinensis.